The primary structure comprises 170 residues: Shikimate kinase (170 aa).

11-16 (LSGKST) contacts ATP. Ser15 is a Mg(2+) binding site. Substrate-binding residues include Asp33, Arg57, and Gly79. Arg119 is a binding site for ATP. Residue Arg137 coordinates substrate.

The protein belongs to the shikimate kinase family. Monomer. It depends on Mg(2+) as a cofactor.

The protein localises to the cytoplasm. It carries out the reaction shikimate + ATP = 3-phosphoshikimate + ADP + H(+). It functions in the pathway metabolic intermediate biosynthesis; chorismate biosynthesis; chorismate from D-erythrose 4-phosphate and phosphoenolpyruvate: step 5/7. Its function is as follows. Catalyzes the specific phosphorylation of the 3-hydroxyl group of shikimic acid using ATP as a cosubstrate. This chain is Shikimate kinase, found in Clostridium botulinum (strain Langeland / NCTC 10281 / Type F).